Consider the following 206-residue polypeptide: MKRPVLIGITGGTGSGKSTVAKEIYNKFDEACIAMIEQDSYYKDQSSIPFEERCKKNYDHPDAFDNELLINHLKNLVDLNVIEKPIYDFEAHNRKEETIKVEPRDIIIVEGILVLQDPKVRELLDIKIYVDTDADVRIIRRLLRDINERGRTVDSVINQYLTVVRPMHMQFIEPSKRYADIIIPEGGHNRVAVDMMVANIKHLLQK.

An ATP-binding site is contributed by 11–18 (GGTGSGKS).

This sequence belongs to the uridine kinase family.

It is found in the cytoplasm. It catalyses the reaction uridine + ATP = UMP + ADP + H(+). The enzyme catalyses cytidine + ATP = CMP + ADP + H(+). The protein operates within pyrimidine metabolism; CTP biosynthesis via salvage pathway; CTP from cytidine: step 1/3. It participates in pyrimidine metabolism; UMP biosynthesis via salvage pathway; UMP from uridine: step 1/1. The protein is Uridine kinase of Clostridium botulinum (strain Okra / Type B1).